A 507-amino-acid polypeptide reads, in one-letter code: Histidine ammonia-lyase (507 aa).

The segment at residues 141-143 (ASG) is a cross-link (5-imidazolinone (Ala-Gly)). Position 142 is a 2,3-didehydroalanine (Ser) (Ser142).

It belongs to the PAL/histidase family. In terms of processing, contains an active site 4-methylidene-imidazol-5-one (MIO), which is formed autocatalytically by cyclization and dehydration of residues Ala-Ser-Gly.

It is found in the cytoplasm. It carries out the reaction L-histidine = trans-urocanate + NH4(+). Its pathway is amino-acid degradation; L-histidine degradation into L-glutamate; N-formimidoyl-L-glutamate from L-histidine: step 1/3. This Burkholderia vietnamiensis (strain G4 / LMG 22486) (Burkholderia cepacia (strain R1808)) protein is Histidine ammonia-lyase.